Reading from the N-terminus, the 62-residue chain is Zinc finger-containing protein P28b (62 aa).

The RING-type; degenerate zinc-finger motif lies at 1–46; sequence MKLFTQNDRYFGLLDSCTHIFCITCINIWHKTRRETGASDNCPICR.

This Vaccinia virus (strain Western Reserve) (VACV) protein is Zinc finger-containing protein P28b.